The sequence spans 368 residues: Biglycan (368 aa).

The N-terminal stretch at 1 to 16 (MKVLLLLCSCILVIHA) is a signal peptide. The propeptide occupies 17–37 (LPFEQRGFWDFSMDDGMAMMK). Disulfide bonds link Cys-63/Cys-69 and Cys-67/Cys-76. LRR repeat units follow at residues 82–102 (TSIPKNLPKDTTLLDLQNNKI), 103–126 (TEIKKDDFKGLTNLYALVIVNNKI), 127–150 (SKINEKAFEPLQKMQKLYISKNNL), 151–171 (EEIPKNLPKSLVELRIHENKI), 172–195 (KKVPKGVFSGLKNMNCIEMGGNPL), 196–220 (ENGGIEAGAFDGLKLNYLRVSEAKL), 221–241 (SGIPKGLPSTLNELHLDNNKI), 242–265 (QAIEKEDLSQYASLYRLGLGHNNI), 266–289 (RMIENGSLSFMPVLRELHLDNNKL), 290–312 (SKVPPGLPDMKLLQVVYLHSNNI), 313–342 (TQVGVNDFCPIGFGVKRAYYNGISLFNNPV), and 343–368 (PYWEVQPATFRCVTDRLAIQFGNYRK). N-linked (GlcNAc...) asparagine glycans are attached at residues Asn-270 and Asn-311. A disulfide bridge connects residues Cys-321 and Cys-354.

It belongs to the small leucine-rich proteoglycan (SLRP) family. SLRP class I subfamily.

It is found in the secreted. The protein localises to the extracellular space. Its subcellular location is the extracellular matrix. In terms of biological role, may be involved in collagen fiber assembly. This is Biglycan (bgn) from Xenopus laevis (African clawed frog).